Consider the following 519-residue polypeptide: Methionine--tRNA ligase (519 aa).

Positions alanine 11–histidine 21 match the 'HIGH' region motif. The 'KMSKS' region signature appears at lysine 299–serine 303. ATP is bound at residue lysine 302. Residues leucine 500–lysine 519 are disordered.

It belongs to the class-I aminoacyl-tRNA synthetase family. MetG type 2B subfamily. As to quaternary structure, monomer.

The protein resides in the cytoplasm. The enzyme catalyses tRNA(Met) + L-methionine + ATP = L-methionyl-tRNA(Met) + AMP + diphosphate. Functionally, is required not only for elongation of protein synthesis but also for the initiation of all mRNA translation through initiator tRNA(fMet) aminoacylation. This Mycobacterium tuberculosis (strain CDC 1551 / Oshkosh) protein is Methionine--tRNA ligase (metG).